Here is a 380-residue protein sequence, read N- to C-terminus: Endonuclease III homolog 2 (380 aa).

The Nuclear localization signal signature appears at 8-12 (RKRKH). An interaction with MLH1 region spans residues 15-40 (VDIEEVEVRSKYFKKNERTVELVKEN). Residue K194 forms a Glycyl lysine isopeptide (Lys-Gly) (interchain with G-Cter in SUMO) linkage. In terms of domain architecture, HhH spans 228 to 252 (FDSDIPYDIEGILSLPGVGPKMGYL). K248 functions as the Nucleophile; for N-glycosylase activity in the catalytic mechanism. [4Fe-4S] cluster is bound by residues C319, C326, C329, and C335. Positions 376 to 380 (RHKKK) match the Nuclear localization signal motif.

The protein belongs to the Nth/MutY family. In terms of assembly, interacts with MLH1. It depends on [4Fe-4S] cluster as a cofactor. Monosumoylated.

Its subcellular location is the nucleus. The enzyme catalyses 2'-deoxyribonucleotide-(2'-deoxyribose 5'-phosphate)-2'-deoxyribonucleotide-DNA = a 3'-end 2'-deoxyribonucleotide-(2,3-dehydro-2,3-deoxyribose 5'-phosphate)-DNA + a 5'-end 5'-phospho-2'-deoxyribonucleoside-DNA + H(+). In terms of biological role, bifunctional DNA N-glycosylase with associated apurinic/apyrimidinic (AP) lyase function that catalyzes the first step in base excision repair (BER), the primary repair pathway for the repair of oxidative DNA damage. The DNA N-glycosylase activity releases the damaged DNA base from DNA by cleaving the N-glycosidic bond, leaving an AP site. The AP-lyase activity cleaves the phosphodiester bond 3' to the AP site by a beta-elimination. Primarily recognizes and repairs oxidative base damage of pyrimidines, but also purine-derived lesions, alkylation damage as well as abasic sites. Can also repair the oxidation products of 8-oxoguanine. This is Endonuclease III homolog 2 (NTG2) from Saccharomyces cerevisiae (strain ATCC 204508 / S288c) (Baker's yeast).